We begin with the raw amino-acid sequence, 92 residues long: UPF0297 protein TTE1249 (92 aa).

Belongs to the UPF0297 family.

This chain is UPF0297 protein TTE1249, found in Caldanaerobacter subterraneus subsp. tengcongensis (strain DSM 15242 / JCM 11007 / NBRC 100824 / MB4) (Thermoanaerobacter tengcongensis).